Here is a 349-residue protein sequence, read N- to C-terminus: Ribosomal RNA small subunit methyltransferase H 1 (349 aa).

S-adenosyl-L-methionine is bound by residues glycine 79–histidine 81, aspartate 99, phenylalanine 129, aspartate 148, and glutamine 155.

Belongs to the methyltransferase superfamily. RsmH family.

It is found in the cytoplasm. It catalyses the reaction cytidine(1402) in 16S rRNA + S-adenosyl-L-methionine = N(4)-methylcytidine(1402) in 16S rRNA + S-adenosyl-L-homocysteine + H(+). Specifically methylates the N4 position of cytidine in position 1402 (C1402) of 16S rRNA. This Agathobacter rectalis (strain ATCC 33656 / DSM 3377 / JCM 17463 / KCTC 5835 / VPI 0990) (Eubacterium rectale) protein is Ribosomal RNA small subunit methyltransferase H 1.